A 957-amino-acid polypeptide reads, in one-letter code: Bifunctional glutamine synthetase adenylyltransferase/adenylyl-removing enzyme (957 aa).

An adenylyl removase region spans residues 1 to 449; that stretch reads MTQHLERPEL…VFDDIIGTDE (449 aa). The tract at residues 457–957 is adenylyl transferase; sequence SEQYNEMWTM…QEYLVPSSDE (501 aa).

It belongs to the GlnE family. The cofactor is Mg(2+).

The catalysed reaction is [glutamine synthetase]-O(4)-(5'-adenylyl)-L-tyrosine + phosphate = [glutamine synthetase]-L-tyrosine + ADP. It catalyses the reaction [glutamine synthetase]-L-tyrosine + ATP = [glutamine synthetase]-O(4)-(5'-adenylyl)-L-tyrosine + diphosphate. In terms of biological role, involved in the regulation of glutamine synthetase GlnA, a key enzyme in the process to assimilate ammonia. When cellular nitrogen levels are high, the C-terminal adenylyl transferase (AT) inactivates GlnA by covalent transfer of an adenylyl group from ATP to specific tyrosine residue of GlnA, thus reducing its activity. Conversely, when nitrogen levels are low, the N-terminal adenylyl removase (AR) activates GlnA by removing the adenylyl group by phosphorolysis, increasing its activity. The regulatory region of GlnE binds the signal transduction protein PII (GlnB) which indicates the nitrogen status of the cell. This chain is Bifunctional glutamine synthetase adenylyltransferase/adenylyl-removing enzyme, found in Photobacterium profundum (strain SS9).